Here is a 146-residue protein sequence, read N- to C-terminus: Transcriptional regulator MraZ (146 aa).

2 consecutive SpoVT-AbrB domains span residues 7 to 54 (HVTN…GPEL) and 83 to 126 (GVYV…DPQA).

It belongs to the MraZ family. In terms of assembly, forms oligomers.

The protein localises to the cytoplasm. Its subcellular location is the nucleoid. This chain is Transcriptional regulator MraZ, found in Rhizobium meliloti (strain 1021) (Ensifer meliloti).